A 455-amino-acid polypeptide reads, in one-letter code: GTPase Der (455 aa).

EngA-type G domains are found at residues 4 to 169 (PVVA…PPKD) and 178 to 353 (IQLS…EQHR). Residues 10 to 17 (GRPNVGKS), 57 to 61 (DTGGL), 120 to 123 (NKCE), 184 to 191 (GRPNVGKS), 231 to 235 (DTAGI), and 296 to 299 (NKWD) each bind GTP. One can recognise a KH-like domain in the interval 354–439 (RRVSTSVVNE…PVKLFWRGKQ (86 aa)).

It belongs to the TRAFAC class TrmE-Era-EngA-EngB-Septin-like GTPase superfamily. EngA (Der) GTPase family. In terms of assembly, associates with the 50S ribosomal subunit.

Its function is as follows. GTPase that plays an essential role in the late steps of ribosome biogenesis. The polypeptide is GTPase Der (Synechococcus sp. (strain CC9311)).